The primary structure comprises 932 residues: Isoleucine--tRNA ligase (932 aa).

Positions 58-68 (PYANGNLHLGH) match the 'HIGH' region motif. L-isoleucyl-5'-AMP is bound at residue Glu-567. The 'KMSKS' region signature appears at 608–612 (KMSKS). Lys-611 contributes to the ATP binding site. Residues Cys-895, Cys-898, Cys-915, and Cys-918 each coordinate Zn(2+).

It belongs to the class-I aminoacyl-tRNA synthetase family. IleS type 1 subfamily. Monomer. Zn(2+) serves as cofactor.

It localises to the cytoplasm. It catalyses the reaction tRNA(Ile) + L-isoleucine + ATP = L-isoleucyl-tRNA(Ile) + AMP + diphosphate. In terms of biological role, catalyzes the attachment of isoleucine to tRNA(Ile). As IleRS can inadvertently accommodate and process structurally similar amino acids such as valine, to avoid such errors it has two additional distinct tRNA(Ile)-dependent editing activities. One activity is designated as 'pretransfer' editing and involves the hydrolysis of activated Val-AMP. The other activity is designated 'posttransfer' editing and involves deacylation of mischarged Val-tRNA(Ile). This is Isoleucine--tRNA ligase from Azoarcus sp. (strain BH72).